We begin with the raw amino-acid sequence, 448 residues long: Mitochondrial distribution and morphology protein 10 (448 aa).

2 disordered regions span residues 101–126 and 366–386; these read QIHPPLAPESPNESRHAEPNERSEKA and PPLPPSPVKGTSASAVTPAGE. The span at 112 to 126 shows a compositional bias: basic and acidic residues; sequence NESRHAEPNERSEKA.

It belongs to the MDM10 family. Component of the ER-mitochondria encounter structure (ERMES) or MDM complex, composed of MMM1, MDM10, MDM12 and MDM34. Associates with the mitochondrial outer membrane sorting assembly machinery SAM(core) complex.

It localises to the mitochondrion outer membrane. Component of the ERMES/MDM complex, which serves as a molecular tether to connect the endoplasmic reticulum and mitochondria. Components of this complex are involved in the control of mitochondrial shape and protein biogenesis and may function in phospholipid exchange. MDM10 is involved in the late assembly steps of the general translocase of the mitochondrial outer membrane (TOM complex). Functions in the TOM40-specific route of the assembly of outer membrane beta-barrel proteins, including the association of TOM40 with the receptor TOM22 and small TOM proteins. Can associate with the SAM(core) complex as well as the MDM12-MMM1 complex, both involved in late steps of the major beta-barrel assembly pathway, that is responsible for biogenesis of all outer membrane beta-barrel proteins. May act as a switch that shuttles between both complexes and channels precursor proteins into the TOM40-specific pathway. Plays a role in mitochondrial morphology and in the inheritance of mitochondria. This Coccidioides immitis (strain RS) (Valley fever fungus) protein is Mitochondrial distribution and morphology protein 10.